Reading from the N-terminus, the 986-residue chain is Regulator of telomere elongation helicase 1 homolog (986 aa).

The Helicase ATP-binding domain occupies 7–326 (AGIPVHFPFE…KEMLLELEKA (320 aa)). 42 to 49 (SPTGTGKT) is an ATP binding site. The [4Fe-4S] cluster site is built by cysteine 148, cysteine 166, cysteine 175, and cysteine 211. The short motif at 254–257 (DEGH) is the DEAH box element. Threonine 875 is subject to Phosphothreonine.

The protein belongs to the helicase family. RAD3/XPD subfamily.

It is found in the nucleus. The enzyme catalyses ATP + H2O = ADP + phosphate + H(+). Functionally, a probable ATP-dependent DNA helicase implicated in DNA repair and the maintenance of genomic stability. Acts as an anti-recombinase to counteract toxic recombination and limit crossover during meiosis. Regulates meiotic recombination and crossover homeostasis by physically dissociating strand invasion events and thereby promotes noncrossover repair by meiotic synthesis dependent strand annealing (SDSA) as well as disassembly of D loop recombination intermediates. This chain is Regulator of telomere elongation helicase 1 homolog, found in Drosophila grimshawi (Hawaiian fruit fly).